The primary structure comprises 373 residues: UDP-N-acetylglucosamine--N-acetylmuramyl-(pentapeptide) pyrophosphoryl-undecaprenol N-acetylglucosamine transferase (373 aa).

UDP-N-acetyl-alpha-D-glucosamine is bound by residues 10-12 (TGG), N124, R166, S196, and Q301.

This sequence belongs to the glycosyltransferase 28 family. MurG subfamily.

Its subcellular location is the cell membrane. It carries out the reaction di-trans,octa-cis-undecaprenyl diphospho-N-acetyl-alpha-D-muramoyl-L-alanyl-D-glutamyl-meso-2,6-diaminopimeloyl-D-alanyl-D-alanine + UDP-N-acetyl-alpha-D-glucosamine = di-trans,octa-cis-undecaprenyl diphospho-[N-acetyl-alpha-D-glucosaminyl-(1-&gt;4)]-N-acetyl-alpha-D-muramoyl-L-alanyl-D-glutamyl-meso-2,6-diaminopimeloyl-D-alanyl-D-alanine + UDP + H(+). It functions in the pathway cell wall biogenesis; peptidoglycan biosynthesis. Its function is as follows. Cell wall formation. Catalyzes the transfer of a GlcNAc subunit on undecaprenyl-pyrophosphoryl-MurNAc-pentapeptide (lipid intermediate I) to form undecaprenyl-pyrophosphoryl-MurNAc-(pentapeptide)GlcNAc (lipid intermediate II). In Desulforudis audaxviator (strain MP104C), this protein is UDP-N-acetylglucosamine--N-acetylmuramyl-(pentapeptide) pyrophosphoryl-undecaprenol N-acetylglucosamine transferase.